A 230-amino-acid polypeptide reads, in one-letter code: NAD(P)H-quinone oxidoreductase subunit K, chloroplastic (230 aa).

Residues Cys43, Cys44, Cys108, and Cys139 each contribute to the [4Fe-4S] cluster site.

It belongs to the complex I 20 kDa subunit family. In terms of assembly, NDH is composed of at least 16 different subunits, 5 of which are encoded in the nucleus. Requires [4Fe-4S] cluster as cofactor.

The protein resides in the plastid. Its subcellular location is the chloroplast thylakoid membrane. The catalysed reaction is a plastoquinone + NADH + (n+1) H(+)(in) = a plastoquinol + NAD(+) + n H(+)(out). It catalyses the reaction a plastoquinone + NADPH + (n+1) H(+)(in) = a plastoquinol + NADP(+) + n H(+)(out). Functionally, NDH shuttles electrons from NAD(P)H:plastoquinone, via FMN and iron-sulfur (Fe-S) centers, to quinones in the photosynthetic chain and possibly in a chloroplast respiratory chain. The immediate electron acceptor for the enzyme in this species is believed to be plastoquinone. Couples the redox reaction to proton translocation, and thus conserves the redox energy in a proton gradient. This chain is NAD(P)H-quinone oxidoreductase subunit K, chloroplastic, found in Lotus japonicus (Lotus corniculatus var. japonicus).